Reading from the N-terminus, the 212-residue chain is Large ribosomal subunit protein uL3 (212 aa).

The tract at residues 136–155 (THGNSVSHRVLGSTGQNQTP) is disordered. Q153 carries the post-translational modification N5-methylglutamine.

Belongs to the universal ribosomal protein uL3 family. Part of the 50S ribosomal subunit. Forms a cluster with proteins L14 and L19. Post-translationally, methylated by PrmB.

Functionally, one of the primary rRNA binding proteins, it binds directly near the 3'-end of the 23S rRNA, where it nucleates assembly of the 50S subunit. In Acinetobacter baumannii (strain AB307-0294), this protein is Large ribosomal subunit protein uL3.